Here is an 839-residue protein sequence, read N- to C-terminus: Phenylalanine--tRNA ligase beta subunit (839 aa).

Residues 42 to 166 (GELTGPIVIG…PPSVEGHQLV (125 aa)) enclose the tRNA-binding domain. The 76-residue stretch at 421–496 (PEMPRQTINA…RKIGFDRIKA (76 aa)) folds into the B5 domain. Mg(2+) is bound by residues Asp-474, Asp-480, Glu-483, and Glu-484. Positions 745-838 (SSFPVAKEDV…AEETCGAQLR (94 aa)) constitute an FDX-ACB domain.

The protein belongs to the phenylalanyl-tRNA synthetase beta subunit family. Type 1 subfamily. As to quaternary structure, tetramer of two alpha and two beta subunits. Mg(2+) is required as a cofactor.

The protein localises to the cytoplasm. The catalysed reaction is tRNA(Phe) + L-phenylalanine + ATP = L-phenylalanyl-tRNA(Phe) + AMP + diphosphate + H(+). This chain is Phenylalanine--tRNA ligase beta subunit, found in Cutibacterium acnes (strain DSM 16379 / KPA171202) (Propionibacterium acnes).